The primary structure comprises 235 residues: Transcription factor hepR (235 aa).

A disordered region spans residues Q14–K45. A C2H2-type zinc finger spans residues I175–H205.

The protein resides in the nucleus. Functionally, transcription factor; part of the gene cluster that mediates the biosynthesis of heptelidic acid (HA), a sesquiterpene lactone that acts as an inhibitor of glyceraldehyde-3-phosphatedehydrogenase (GAPDH) and a growth inhibitor of the salt-tolerant lactic acid bacteria in soy sauce brewing. Both hepR and hepS regulate the transcription of the heptelidic acid cluster, but they are not involved in mutual transcriptional regulation and act with different mechanisms. The polypeptide is Transcription factor hepR (Aspergillus oryzae (strain ATCC 42149 / RIB 40) (Yellow koji mold)).